We begin with the raw amino-acid sequence, 187 residues long: Acetyl-CoA decarbonylase/synthase complex subunit epsilon (187 aa).

M1 carries the blocked amino end (Met) modification.

It belongs to the CdhB family. In terms of assembly, heterotetramer of two alpha and two epsilon subunits. The ACDS complex is made up of alpha, epsilon, beta, gamma and delta subunits with a probable stoichiometry of (alpha(2)epsilon(2))(4)-beta(8)-(gamma(1)delta(1))(8).

Its function is as follows. Part of a complex that catalyzes the reversible cleavage of acetyl-CoA, allowing autotrophic growth from CO(2). The alpha-epsilon subcomponent functions as a carbon monoxide dehydrogenase. The precise role of the epsilon subunit is unclear; it may have a stabilizing role within the alpha(2)epsilon(2) component and/or be involved in electron transfer to FAD during a potential FAD-mediated CO oxidation. The sequence is that of Acetyl-CoA decarbonylase/synthase complex subunit epsilon from Methanothrix soehngenii (Methanosaeta concilii).